Consider the following 398-residue polypeptide: Succinate--CoA ligase [ADP-forming] subunit beta (398 aa).

The region spanning 9 to 253 is the ATP-grasp domain; that stretch reads KQVLAKYGVA…ESEEDPAELE (245 aa). ATP-binding positions include Lys46, 53–55, Glu108, Cys111, and Glu116; that span reads GRG. Asn208 and Asp222 together coordinate Mg(2+). Residues Asn273 and 330–332 contribute to the substrate site; that span reads GIM.

Belongs to the succinate/malate CoA ligase beta subunit family. As to quaternary structure, heterotetramer of two alpha and two beta subunits. Requires Mg(2+) as cofactor.

The catalysed reaction is succinate + ATP + CoA = succinyl-CoA + ADP + phosphate. The enzyme catalyses GTP + succinate + CoA = succinyl-CoA + GDP + phosphate. It participates in carbohydrate metabolism; tricarboxylic acid cycle; succinate from succinyl-CoA (ligase route): step 1/1. In terms of biological role, succinyl-CoA synthetase functions in the citric acid cycle (TCA), coupling the hydrolysis of succinyl-CoA to the synthesis of either ATP or GTP and thus represents the only step of substrate-level phosphorylation in the TCA. The beta subunit provides nucleotide specificity of the enzyme and binds the substrate succinate, while the binding sites for coenzyme A and phosphate are found in the alpha subunit. The chain is Succinate--CoA ligase [ADP-forming] subunit beta from Paramagnetospirillum magneticum (strain ATCC 700264 / AMB-1) (Magnetospirillum magneticum).